We begin with the raw amino-acid sequence, 363 residues long: tRNA(Met) cytidine acetate ligase (363 aa).

ATP is bound by residues 7-20 (IAEYNPFHTGHKYL), G96, N152, and R175.

Belongs to the TmcAL family.

The protein resides in the cytoplasm. The catalysed reaction is cytidine(34) in elongator tRNA(Met) + acetate + ATP = N(4)-acetylcytidine(34) in elongator tRNA(Met) + AMP + diphosphate. In terms of biological role, catalyzes the formation of N(4)-acetylcytidine (ac(4)C) at the wobble position of elongator tRNA(Met), using acetate and ATP as substrates. First activates an acetate ion to form acetyladenylate (Ac-AMP) and then transfers the acetyl group to tRNA to form ac(4)C34. In Streptococcus suis (strain 98HAH33), this protein is tRNA(Met) cytidine acetate ligase.